Reading from the N-terminus, the 95-residue chain is Progonadoliberin-1 (95 aa).

Residues 1–23 (MAPQTSNLWLLLVVMMVMSQGCC) form the signal peptide. Gln24 bears the Pyrrolidone carboxylic acid mark. At Gly33 the chain carries Glycine amide.

This sequence belongs to the GnRH family.

The protein resides in the secreted. In terms of biological role, stimulates the secretion of gonadotropins. The chain is Progonadoliberin-1 (gnrh1) from Pagrus major (Red sea bream).